A 694-amino-acid polypeptide reads, in one-letter code: Glycine--tRNA ligase beta subunit (694 aa).

This sequence belongs to the class-II aminoacyl-tRNA synthetase family. Tetramer of two alpha and two beta subunits.

It is found in the cytoplasm. The enzyme catalyses tRNA(Gly) + glycine + ATP = glycyl-tRNA(Gly) + AMP + diphosphate. The protein is Glycine--tRNA ligase beta subunit of Moorella thermoacetica (strain ATCC 39073 / JCM 9320).